The chain runs to 60 residues: UPF0434 protein NMC0623 (60 aa).

The protein belongs to the UPF0434 family.

In Neisseria meningitidis serogroup C / serotype 2a (strain ATCC 700532 / DSM 15464 / FAM18), this protein is UPF0434 protein NMC0623.